The sequence spans 189 residues: Glycerol-3-phosphate acyltransferase (189 aa).

Transmembrane regions (helical) follow at residues 1–21, 50–70, 77–97, 111–131, and 151–171; these read MFWL…AIVL, KLAI…VLLA, LHAQ…PLYF, MLMG…LLTF, and LLAW…AMIV.

This sequence belongs to the PlsY family. In terms of assembly, probably interacts with PlsX.

It is found in the cell inner membrane. It catalyses the reaction an acyl phosphate + sn-glycerol 3-phosphate = a 1-acyl-sn-glycero-3-phosphate + phosphate. The protein operates within lipid metabolism; phospholipid metabolism. Functionally, catalyzes the transfer of an acyl group from acyl-phosphate (acyl-PO(4)) to glycerol-3-phosphate (G3P) to form lysophosphatidic acid (LPA). This enzyme utilizes acyl-phosphate as fatty acyl donor, but not acyl-CoA or acyl-ACP. This Pseudomonas putida (strain GB-1) protein is Glycerol-3-phosphate acyltransferase.